The chain runs to 108 residues: Replication restart protein PriB (108 aa).

In terms of domain architecture, SSB spans 8 to 108 (IDNRFSVMGV…LHAEQIEFID (101 aa)).

It belongs to the PriB family. As to quaternary structure, homodimer. Interacts with PriA and DnaT. Component of the replication restart primosome. Primosome assembly occurs via a 'hand-off' mechanism. PriA binds to replication forks, subsequently PriB then DnaT bind; DnaT then displaces ssDNA to generate the helicase loading substrate.

In terms of biological role, involved in the restart of stalled replication forks, which reloads the replicative helicase on sites other than the origin of replication; the PriA-PriB pathway is the major replication restart pathway. During primosome assembly it facilitates complex formation between PriA and DnaT on DNA; stabilizes PriA on DNA. Stimulates the DNA unwinding activity of PriA helicase. This Haemophilus influenzae (strain 86-028NP) protein is Replication restart protein PriB.